A 234-amino-acid chain; its full sequence is Probable plastid-lipid-associated protein 5, chloroplastic (234 aa).

Residues 1-45 (MALPWCLKTGVLTSPAAGFNHPSDSGFAVPTKLLSIRKGDRERLR) constitute a chloroplast transit peptide.

The protein belongs to the PAP/fibrillin family.

It is found in the plastid. The protein resides in the chloroplast thylakoid. The polypeptide is Probable plastid-lipid-associated protein 5, chloroplastic (PAP5) (Arabidopsis thaliana (Mouse-ear cress)).